The chain runs to 382 residues: LIM homeobox transcription factor 1-alpha (382 aa).

2 consecutive LIM zinc-binding domains span residues 33 to 92 (SVCE…LFAV) and 92 to 154 (VKCG…EREL). Disordered stretches follow at residues 161–208 (AASD…QQRR) and 252–286 (KLAR…MEGI). Residues 195–254 (PKRPRTILTTQQRRAFKASFEVSSKPCRKVRETLAAETGLSVRVVQVWFQNQRAKMKKLA) constitute a DNA-binding region (homeobox). The span at 256–269 (RQQQQQQDQQNTQR) shows a compositional bias: low complexity.

It localises to the nucleus. Functionally, acts as a transcriptional activator by binding to an A/T-rich sequence, the FLAT element, in the insulin gene promoter. Required for development of the roof plate and, in turn, for specification of dorsal cell fates in the CNS and developing vertebrae. In Mus musculus (Mouse), this protein is LIM homeobox transcription factor 1-alpha (Lmx1a).